Reading from the N-terminus, the 794-residue chain is MDFLELEAIEGLRWSWNSWPTTKSDCESLVVPLSIMYTPLMHFSELPTIPYDPLICSRCGAVLNPYARVDYQSRIWSCPFCFHKNLFPRSYSGITETNLPAELFPTYSAVEYSPLPSRQSGSNTTTPTAAASWSNGFNQGVRSMPSNSSFSSLASSTVGGGGGVISELGPAFVFVVDASMVEDELRAVRSDVLFVIEQLPENCLVALITFDSMVRVYDLGFSECSKVVVFHGERDLSPDQIQQFLGLGYSKQFHHGKMSAIRKQSFLLPLVECEFNLTSAFEEIIPLVDVKPGHRPHRSTGAAISTALGLLEGCSVTTGSRIMVFTSGPATRGPGIIVDSDLSNSIRTHRDIITGHVSYYDKSCGFYKKLAKRLCDSSVVLDVFACSLDQVGAAELRYAVEMSGGFLLLGETFESEQFKKCLRHIFIRDADGNLSMYFDVSLEVVTTKDMRICGALGPVVSLRQKNDIVSETEIGEGGTYMWKTSTVTNKTCVSFFFHVSNEQNRKPQPGSAFFIQFITRYRYGNGAMRKRVTTVARRWVAGKSPEISSSFDQETAASVMARLAINRAEECHARDVITWLDNGLIRFASRFGDYIQEDPSSFRLTPNFSLYPQFMFYLRRSQFLDVFNNSPDETGFFRLMLNREGVVNSIIMIQPTLLRYSFDGPPVPVLLDIRSVTPDVILLFDSYFYVVIHHGSKIAQWRKLEYHKDPSHETFRNLLEAPEIDAAQLVTDRIPMPRIVRCDQHGSQARFLLAKLNPSVTQKTDHTGGSDIVLTDDMSLQDFLEDLQSLAVKG.

Residues Cys56, Cys59, Cys78, and Cys81 each contribute to the Zn(2+) site. A zinc finger-like region spans residues 56 to 81; the sequence is CSRCGAVLNPYARVDYQSRIWSCPFC.

Belongs to the SEC23/SEC24 family. SEC23 subfamily. As to quaternary structure, component of the coat protein complex II (COPII), composed of at least five proteins: the Sec23/24 complex, the Sec13/31 complex and Sar1. Interacts with SEC24A.

It localises to the cytoplasmic vesicle. The protein localises to the COPII-coated vesicle membrane. It is found in the endoplasmic reticulum membrane. The protein resides in the membrane. Its function is as follows. Component of the coat protein complex II (COPII) which promotes the formation of transport vesicles from the endoplasmic reticulum (ER). The coat has two main functions, the physical deformation of the endoplasmic reticulum membrane into vesicles and the selection of cargo molecules. This is Protein transport protein SEC23 G from Arabidopsis thaliana (Mouse-ear cress).